The following is a 582-amino-acid chain: MAAITSNVSRLEPMRGISIIIESPEVATATPPPATTTATAEAEAATKQVAPTAKSNSNTEMSLKSQAAGMLLAFGDTAATAKDNLETSYDTAAKSTAAPETNKIYPQLLLRIGGEIAGATASAEAAASAATAAAATATSPTIISCNGEIAASQAAATAADTAATLQHNNTVKIQIESQGQQRTLGKQISVVKLNEGVEEMQQHMCYLVDTSGQYSPCETLDSGTGSDLENHPQQQQQPQQVRSPQLELHLQTTRLMVNEEADHKHSPLETPSPVPKRAYSLTDDSEECDESSNSSLSCDSLHSGGLLPTTLLRDIRFRERASGPLVTKINGRPLQFETDGYYTFHVREHENFRSFGSNSSTEYEAQHFTDEQPGEDFVGFRDIRTAGKLAGNSTIKSAKGTVRGVKNRVRNGVATFLQLQQPNVKNYMEKDVGKVVLYTTSMGIIRDTYAKCANVKKILRTLLIKFEERDIFMSVEYQQEMRERMQDETIRVPQLFVEGQLIGDANIVERLNESGELRQLLRPYKSIATAYTCQTCGGYRMLPCPACNGSKKSMHRNHFTAEFVALKCMNCDEVGLIKCPNC.

Positions 217 to 227 are enriched in polar residues; sequence CETLDSGTGSD. Disordered stretches follow at residues 217–244 and 260–300; these read CETLDSGTGSDLENHPQQQQQPQQVRSP and EADH…SCDS. Residues 291 to 300 show a composition bias toward low complexity; sequence SSNSSLSCDS. Positions 423–528 constitute a Glutaredoxin domain; that stretch reads NVKNYMEKDV…QLLRPYKSIA (106 aa).

Belongs to the GRXCR1 family.

The sequence is that of Glutaredoxin domain-containing cysteine-rich protein CG12206 from Drosophila melanogaster (Fruit fly).